We begin with the raw amino-acid sequence, 323 residues long: Probable oxidoreductase patJ (323 aa).

The disordered stretch occupies residues 291–323 (DQSANGVNGHATGVEAKKKQLGDMTRRRSGAQE). Basic and acidic residues predominate over residues 305–316 (EAKKKQLGDMTR).

This sequence belongs to the oxidoreductase OpS7 family.

Its subcellular location is the vacuole lumen. The protein resides in the cytoplasmic vesicle lumen. It participates in mycotoxin biosynthesis; patulin biosynthesis. In terms of biological role, probable oxidoreductase; part of the gene cluster that mediates the biosynthesis of patulin, an acetate-derived tetraketide mycotoxin produced by several fungal species that shows antimicrobial properties against several bacteria. PatJ acts with patO in the vacuole to convert gentisyl alcohol to isoepoxydon. The pathway begins with the synthesis of 6-methylsalicylic acid by the polyketide synthase (PKS) patK via condensation of acetate and malonate units. The 6-methylsalicylic acid decarboxylase patG then catalyzes the decarboxylation of 6-methylsalicylic acid to yield m-cresol (also known as 3-methylphenol). These first reactions occur in the cytosol. The intermediate m-cresol is then transported into the endoplasmic reticulum where the cytochrome P450 monooxygenase patH converts it to m-hydroxybenzyl alcohol, which is further converted to gentisyl alcohol by the cytochrome P450 monooxygenase patI. The oxidoreductases patJ and patO further convert gentisyl alcohol to isoepoxydon in the vacuole. PatN catalyzes then the transformation of isoepoxydon into phyllostine. The cluster protein patF is responsible for the conversion from phyllostine to neopatulin whereas the alcohol dehydrogenase patD converts neopatulin to E-ascladiol. The steps between isoepoxydon and E-ascladiol occur in the cytosol, and E-ascladiol is probably secreted to the extracellular space by one of the cluster-specific transporters patC or patM. Finally, the secreted patulin synthase patE catalyzes the conversion of E-ascladiol to patulin. The chain is Probable oxidoreductase patJ from Aspergillus clavatus (strain ATCC 1007 / CBS 513.65 / DSM 816 / NCTC 3887 / NRRL 1 / QM 1276 / 107).